We begin with the raw amino-acid sequence, 574 residues long: Eukaryotic translation initiation factor 3 subunit D (574 aa).

A disordered region spans residues 153-178 (QRRGGNARQGQRGQGGRFGGDRPKER). A compositionally biased stretch (low complexity) spans 154 to 163 (RRGGNARQGQ). The RNA gate stretch occupies residues 312–326 (PVETLTVSETSAEPP). The tract at residues 555 to 574 (EGTFDSERESSEEENSDDDQ) is disordered. Positions 564 to 574 (SSEEENSDDDQ) are enriched in acidic residues.

Belongs to the eIF-3 subunit D family. Component of the eukaryotic translation initiation factor 3 (eIF-3) complex.

It is found in the cytoplasm. In terms of biological role, mRNA cap-binding component of the eukaryotic translation initiation factor 3 (eIF-3) complex, which is involved in protein synthesis of a specialized repertoire of mRNAs and, together with other initiation factors, stimulates binding of mRNA and methionyl-tRNAi to the 40S ribosome. The eIF-3 complex specifically targets and initiates translation of a subset of mRNAs involved in cell proliferation. In the eIF-3 complex, eif3d specifically recognizes and binds the 7-methylguanosine cap of a subset of mRNAs. The protein is Eukaryotic translation initiation factor 3 subunit D of Caenorhabditis briggsae.